The chain runs to 627 residues: uncharacterized protein (627 aa).

2 disordered regions span residues 141 to 187 and 490 to 510; these read LRYP…TPPS and ENEN…GPRT. The span at 491 to 510 shows a compositional bias: polar residues; that stretch reads NENTNGSANNSTYTNGGPRT. A Phosphoserine modification is found at serine 559.

This is an uncharacterized protein from Saccharomyces cerevisiae (strain ATCC 204508 / S288c) (Baker's yeast).